A 189-amino-acid polypeptide reads, in one-letter code: GMP synthase [glutamine-hydrolyzing] subunit A (189 aa).

A Glutamine amidotransferase type-1 domain is found at 1-189 (MIVILNNGGQ…CKVCGFKFNE (189 aa)). Cysteine 76 serves as the catalytic Nucleophile. Catalysis depends on residues histidine 163 and glutamate 165.

As to quaternary structure, heterodimer composed of a glutamine amidotransferase subunit (A) and a GMP-binding subunit (B).

It catalyses the reaction XMP + L-glutamine + ATP + H2O = GMP + L-glutamate + AMP + diphosphate + 2 H(+). It functions in the pathway purine metabolism; GMP biosynthesis; GMP from XMP (L-Gln route): step 1/1. In terms of biological role, catalyzes the synthesis of GMP from XMP. This is GMP synthase [glutamine-hydrolyzing] subunit A from Methanococcus vannielii (strain ATCC 35089 / DSM 1224 / JCM 13029 / OCM 148 / SB).